A 331-amino-acid polypeptide reads, in one-letter code: MNISILGAGAWGTALAMSLAERHAVMLWGRDAAVMQAAQQARENAVYLPGFRFPDKLLLSSELGAAITHAGSDGLLIVATSLAGLRPLAMQLKPYAIPNLVWLCKGFEEQTNLLPHQIVHEILGDAIPAGALSGPSFAQEVARGLPCALAIASDSEALRERVVHAVHGPAIRIYSTDDLIGVEVGGAVKNILAIATGIIDGLGLGLNARAALITRGLSEITRLGVALGGRAETFNGLAGMGDLILTCTGDLSRNRKVGLGLAQGKKLEQIVVELGHVAEGVRCAQAVRQLANQHGVDMPITNAVAAVLFDGESPRDTVKRLLSRESRDEIA.

Residues Trp11, Arg30, and Lys105 each coordinate NADPH. Positions 105, 134, and 136 each coordinate sn-glycerol 3-phosphate. Ala138 serves as a coordination point for NADPH. Residues Lys189, Asp242, Ser252, Arg253, and Asn254 each contribute to the sn-glycerol 3-phosphate site. Lys189 (proton acceptor) is an active-site residue. Arg253 is an NADPH binding site. NADPH contacts are provided by Val277 and Glu279.

The protein belongs to the NAD-dependent glycerol-3-phosphate dehydrogenase family.

It is found in the cytoplasm. It catalyses the reaction sn-glycerol 3-phosphate + NAD(+) = dihydroxyacetone phosphate + NADH + H(+). The catalysed reaction is sn-glycerol 3-phosphate + NADP(+) = dihydroxyacetone phosphate + NADPH + H(+). Its pathway is membrane lipid metabolism; glycerophospholipid metabolism. Functionally, catalyzes the reduction of the glycolytic intermediate dihydroxyacetone phosphate (DHAP) to sn-glycerol 3-phosphate (G3P), the key precursor for phospholipid synthesis. This is Glycerol-3-phosphate dehydrogenase [NAD(P)+] from Janthinobacterium sp. (strain Marseille) (Minibacterium massiliensis).